The sequence spans 472 residues: 6-phosphogluconate dehydrogenase, decarboxylating (472 aa).

NADP(+) contacts are provided by residues 10–15, 33–35, 74–76, and N102; these read GMAVMG, NRT, and VQA. Substrate is bound by residues N102 and 128 to 130; that span reads SGG. K184 acts as the Proton acceptor in catalysis. A substrate-binding site is contributed by 187 to 188; sequence HN. Catalysis depends on E191, which acts as the Proton donor. Residues Y192, K262, R289, R447, and H453 each contribute to the substrate site.

The protein belongs to the 6-phosphogluconate dehydrogenase family. In terms of assembly, homodimer.

It catalyses the reaction 6-phospho-D-gluconate + NADP(+) = D-ribulose 5-phosphate + CO2 + NADPH. Its pathway is carbohydrate degradation; pentose phosphate pathway; D-ribulose 5-phosphate from D-glucose 6-phosphate (oxidative stage): step 3/3. In terms of biological role, catalyzes the oxidative decarboxylation of 6-phosphogluconate to ribulose 5-phosphate and CO(2), with concomitant reduction of NADP to NADPH. The chain is 6-phosphogluconate dehydrogenase, decarboxylating (gnd) from Lactococcus lactis subsp. cremoris (strain MG1363).